Reading from the N-terminus, the 101-residue chain is Small ribosomal subunit protein uS14 (101 aa).

This sequence belongs to the universal ribosomal protein uS14 family. As to quaternary structure, part of the 30S ribosomal subunit. Contacts proteins S3 and S10.

In terms of biological role, binds 16S rRNA, required for the assembly of 30S particles and may also be responsible for determining the conformation of the 16S rRNA at the A site. This chain is Small ribosomal subunit protein uS14, found in Shewanella sediminis (strain HAW-EB3).